Consider the following 214-residue polypeptide: Phosphatidylcholine transfer protein (214 aa).

N-acetylmethionine is present on M1. The 212-residue stretch at 1-212 folds into the START domain; that stretch reads MAGAACCFSD…MVKACQNYHK (212 aa). 2 residues coordinate a 1,2-diacyl-sn-glycero-3-phosphocholine: Y72 and R78. Position 139 is a phosphoserine (S139). A 1,2-diacyl-sn-glycero-3-phosphocholine is bound at residue Q157.

In terms of assembly, interacts with ACOT13/THEM2. In terms of tissue distribution, abundant in liver of pups but levels in liver decrease 10-fold about 2 weeks after birth. In adult, highly expressed in epididymis, testis, kidney and bone-marrow derived mast cells.

It is found in the cytoplasm. Catalyzes the transfer of phosphatidylcholine between membranes. Binds a single lipid molecule. This chain is Phosphatidylcholine transfer protein (Pctp), found in Mus musculus (Mouse).